Consider the following 371-residue polypeptide: Glutamate 5-kinase (371 aa).

K10 provides a ligand contact to ATP. Substrate contacts are provided by S50, D137, and N149. ATP is bound by residues 169–170 and 208–214; these read SD and TGGMFTK. The PUA domain maps to 274 to 352; it reads EGRIYIDDGA…EEIRNILGED (79 aa).

This sequence belongs to the glutamate 5-kinase family.

Its subcellular location is the cytoplasm. The catalysed reaction is L-glutamate + ATP = L-glutamyl 5-phosphate + ADP. It functions in the pathway amino-acid biosynthesis; L-proline biosynthesis; L-glutamate 5-semialdehyde from L-glutamate: step 1/2. Its function is as follows. Catalyzes the transfer of a phosphate group to glutamate to form L-glutamate 5-phosphate. This chain is Glutamate 5-kinase, found in Dictyoglomus turgidum (strain DSM 6724 / Z-1310).